The primary structure comprises 1773 residues: Mucin-22 (1773 aa).

Residues 1–26 (MRRGNISPAFWFLWLLLFGLLGPSSE) form the signal peptide. The Extracellular portion of the chain corresponds to 27 to 1660 (NTTAFTKGSD…VIKPSGYLQP (1634 aa)). 8 disordered regions span residues 61–102 (TGSK…TDSG), 176–357 (TMAS…SETT), 372–405 (MGSETTTNSTTSSETTVTSTAGSETTTVSTVGSE), 434–572 (SETI…STAS), 590–674 (TVGS…EGSE), 754–1026 (DTTT…ETTM), 1064–1485 (TTIA…GSET), and 1603–1639 (MGASSTTSAHGVRTTTGSTREPTSSTFQETGPVSMGT). A 124 X 10 AA approximate repeats region spans residues 153–1514 (MASSTTSTAG…PTATSLTGSE (1362 aa)). Positions 178–243 (ASTTGSETAT…GSEATTTSTA (66 aa)) are enriched in low complexity. Over residues 248 to 258 (ITASSMSSETT) the composition is skewed to polar residues. Positions 262–357 (AAGSNTTTAS…TVSTAGSETT (96 aa)) are enriched in low complexity. Low complexity-rich tracts occupy residues 440 to 481 (STAG…AAST) and 490 to 546 (STAG…SEPT). The segment covering 547–572 (MASTMGSETTMASTIGPETTKVSTAS) has biased composition (polar residues). Low complexity-rich tracts occupy residues 755-1025 (TTTA…SETT) and 1064-1465 (TTIA…GSET). 2 stretches are compositionally biased toward polar residues: residues 1466–1485 (NTACTTGSETSTPSSAGSET) and 1615–1639 (RTTTGSTREPTSSTFQETGPVSMGT). The chain crosses the membrane as a helical span at residues 1661 to 1681 (WAIILISLAAVVAAVGLSVGL). Over 1682-1773 (SFCLRNLFFP…GGHYGHGGGH (92 aa)) the chain is Cytoplasmic.

Expressed in lung by serous cells of the submucosal gland (at protein level). Detected in the placenta, lung and testis.

Its subcellular location is the membrane. This chain is Mucin-22 (MUC22), found in Homo sapiens (Human).